Here is a 667-residue protein sequence, read N- to C-terminus: MSSQPAGNQTSPGATEDYSYGSWYIDEPQGGEELQPEGEVPSCHTSIPPGLYHACLASLSILVLLLLAMLVRRRQLWPDCVRGRPGLPSPVDFLAGDRPRAVPAAVFMVLLSSLCLLLPDEDALPFLTLASAPSQDGKTEAPRGAWKILGLFYYAALYYPLAACATAGHTAAHLLGSTLSWAHLGVQVWQRAECPQVPKIYKYYSLLASLPLLLGLGFLSLWYPVQLVRSFSRRTGAGSKGLQSSYSEEYLRNLLCRKKLGSSYHTSKHGFLSWARVCLRHCIYTPQPGFHLPLKLVLSATLTGTAIYQVALLLLVGVVPTIQKVRAGVTTDVSYLLAGFGIVLSEDKQEVVELVKHHLWALEVCYISALVLSCLLTFLVLMRSLVTHRTNLRALHRGAALDLSPLHRSPHPSRQAIFCWMSFSAYQTAFICLGLLVQQIIFFLGTTALAFLVLMPVLHGRNLLLFRSLESSWPFWLTLALAVILQNMAAHWVFLETHDGHPQLTNRRVLYAATFLLFPLNVLVGAMVATWRVLLSALYNAIHLGQMDLSLLPPRAATLDPGYYTYRNFLKIEVSQSHPAMTAFCSLLLQAQSLLPRTMAAPQDSLRPGEEDEGMQLLQTKDSMAKGARPGASRGRARWGLAYTLLHNPTLQVFRKTALLGANGAQP.

The span at 1–13 (MSSQPAGNQTSPG) shows a compositional bias: polar residues. The tract at residues 1–20 (MSSQPAGNQTSPGATEDYSY) is disordered. The Extracellular portion of the chain corresponds to 1–50 (MSSQPAGNQTSPGATEDYSYGSWYIDEPQGGEELQPEGEVPSCHTSIPPG). Asn-8 carries an N-linked (GlcNAc...) asparagine glycan. Residues 51 to 71 (LYHACLASLSILVLLLLAMLV) traverse the membrane as a helical segment. The Cytoplasmic portion of the chain corresponds to 72-100 (RRRQLWPDCVRGRPGLPSPVDFLAGDRPR). A helical membrane pass occupies residues 101 to 121 (AVPAAVFMVLLSSLCLLLPDE). Over 122–144 (DALPFLTLASAPSQDGKTEAPRG) the chain is Extracellular. The chain crosses the membrane as a helical span at residues 145-165 (AWKILGLFYYAALYYPLAACA). Over 166–168 (TAG) the chain is Cytoplasmic. The helical transmembrane segment at 169–189 (HTAAHLLGSTLSWAHLGVQVW) threads the bilayer. The Extracellular portion of the chain corresponds to 190–205 (QRAECPQVPKIYKYYS). The helical transmembrane segment at 206–226 (LLASLPLLLGLGFLSLWYPVQ) threads the bilayer. The Cytoplasmic portion of the chain corresponds to 227 to 295 (LVRSFSRRTG…PQPGFHLPLK (69 aa)). Residues 235–293 (TGAGSKGLQSSYSEEYLRNLLCRKKLGSSYHTSKHGFLSWARVCLRHCIYTPQPGFHLP) are interaction with RBP1. Residues 296 to 316 (LVLSATLTGTAIYQVALLLLV) form a helical membrane-spanning segment. The Extracellular portion of the chain corresponds to 317-367 (GVVPTIQKVRAGVTTDVSYLLAGFGIVLSEDKQEVVELVKHHLWALEVCYI). Residues 368–388 (SALVLSCLLTFLVLMRSLVTH) traverse the membrane as a helical segment. Residues 389–422 (RTNLRALHRGAALDLSPLHRSPHPSRQAIFCWMS) lie on the Cytoplasmic side of the membrane. A helical transmembrane segment spans residues 423–443 (FSAYQTAFICLGLLVQQIIFF). The Extracellular segment spans residues 444–473 (LGTTALAFLVLMPVLHGRNLLLFRSLESSW). A helical transmembrane segment spans residues 474 to 494 (PFWLTLALAVILQNMAAHWVF). The Cytoplasmic portion of the chain corresponds to 495 to 509 (LETHDGHPQLTNRRV). Positions 510–547 (LYAATFLLFPLNVLVGAMVATWRVLLSALYNAIHLGQM) form an intramembrane region, helical. Over 548–667 (DLSLLPPRAA…ALLGANGAQP (120 aa)) the chain is Cytoplasmic. Position 643 is a phosphotyrosine (Tyr-643).

Homodimer. Interacts with JAK2 and STAT5. Interacts (via extracellular domains) with RBP4. Interacts (via cytoplasmic domains) with RBP1. In terms of processing, phosphorylated on tyrosine residues in response to RBP4 binding. Phosphorylation requires the presence of LRAT, suggesting it may be triggered by the uptake of retinol that is then metabolized within the cell to retinoids that function as signaling molecules. In terms of tissue distribution, broad expression. In adult eye expressed in sclera, retina, retinal pigment epithelium, and trabecular meshwork but not in choroid and iris.

The protein resides in the cell membrane. Functions as a retinol transporter. Accepts all-trans retinol from the extracellular retinol-binding protein RBP4, facilitates retinol transport across the cell membrane, and then transfers retinol to the cytoplasmic retinol-binding protein RBP1. Retinol uptake is enhanced by LRAT, an enzyme that converts retinol to all-trans retinyl esters, the storage forms of vitamin A. Contributes to the activation of a signaling cascade that depends on retinol transport and LRAT-dependent generation of retinol metabolites that then trigger activation of JAK2 and its target STAT5, and ultimately increase the expression of SOCS3 and inhibit cellular responses to insulin. Important for the homeostasis of vitamin A and its derivatives, such as retinoic acid. STRA6-mediated transport is particularly important in the eye, and under conditions of dietary vitamin A deficiency. Does not transport retinoic acid. The polypeptide is Receptor for retinol uptake STRA6 (STRA6) (Homo sapiens (Human)).